The chain runs to 294 residues: Indole-3-glycerol phosphate synthase (294 aa).

This sequence belongs to the TrpC family.

It catalyses the reaction 1-(2-carboxyphenylamino)-1-deoxy-D-ribulose 5-phosphate + H(+) = (1S,2R)-1-C-(indol-3-yl)glycerol 3-phosphate + CO2 + H2O. It functions in the pathway amino-acid biosynthesis; L-tryptophan biosynthesis; L-tryptophan from chorismate: step 4/5. In Synechococcus sp. (strain CC9902), this protein is Indole-3-glycerol phosphate synthase.